A 370-amino-acid polypeptide reads, in one-letter code: Uroporphyrinogen decarboxylase (370 aa).

Residues 29-33 (RQAGR), Asp-79, Tyr-155, Ser-210, and His-342 contribute to the substrate site.

It belongs to the uroporphyrinogen decarboxylase family. As to quaternary structure, homodimer.

The protein resides in the cytoplasm. The enzyme catalyses uroporphyrinogen III + 4 H(+) = coproporphyrinogen III + 4 CO2. It functions in the pathway porphyrin-containing compound metabolism; protoporphyrin-IX biosynthesis; coproporphyrinogen-III from 5-aminolevulinate: step 4/4. Its function is as follows. Catalyzes the decarboxylation of four acetate groups of uroporphyrinogen-III to yield coproporphyrinogen-III. The chain is Uroporphyrinogen decarboxylase from Acidovorax ebreus (strain TPSY) (Diaphorobacter sp. (strain TPSY)).